We begin with the raw amino-acid sequence, 322 residues long: ATP-dependent 6-phosphofructokinase (322 aa).

ATP is bound by residues Gly-12, 73-74 (RF), and 103-106 (GDGT). A Mg(2+)-binding site is contributed by Asp-104. 126–128 (TID) contributes to the substrate binding site. The active-site Proton acceptor is Asp-128. Arg-155 provides a ligand contact to ADP. Residues Arg-163 and 170–172 (MGR) contribute to the substrate site. Residues 186 to 188 (GSE), Lys-212, and 214 to 216 (KPS) contribute to the ADP site. Residues Glu-223, Arg-245, and 251 to 254 (HTQR) contribute to the substrate site.

This sequence belongs to the phosphofructokinase type A (PFKA) family. ATP-dependent PFK group I subfamily. Prokaryotic clade 'B1' sub-subfamily. As to quaternary structure, homotetramer. Mg(2+) is required as a cofactor.

The protein localises to the cytoplasm. The enzyme catalyses beta-D-fructose 6-phosphate + ATP = beta-D-fructose 1,6-bisphosphate + ADP + H(+). It participates in carbohydrate degradation; glycolysis; D-glyceraldehyde 3-phosphate and glycerone phosphate from D-glucose: step 3/4. With respect to regulation, allosterically activated by ADP and other diphosphonucleosides, and allosterically inhibited by phosphoenolpyruvate. Functionally, catalyzes the phosphorylation of D-fructose 6-phosphate to fructose 1,6-bisphosphate by ATP, the first committing step of glycolysis. The sequence is that of ATP-dependent 6-phosphofructokinase from Mesomycoplasma hyopneumoniae (strain 232) (Mycoplasma hyopneumoniae).